A 396-amino-acid chain; its full sequence is Pyruvate dehydrogenase E1 component subunit alpha type I, mitochondrial (396 aa).

Residues 1–25 (MIFVFANIFKVPTVSPSVMAISVRL) constitute a mitochondrion transit peptide. Pyruvate contacts are provided by His88, Tyr114, Arg115, Gly153, Gly161, Val163, Asp192, Gly193, Ala194, Asn221, and Tyr223. Positions 114 and 115 each coordinate thiamine diphosphate. Thiamine diphosphate is bound by residues Gly161, Val163, Asp192, Gly193, Ala194, and Asn221. Asp192 is a binding site for Mg(2+). Mg(2+)-binding residues include Asn221 and Tyr223. A thiamine diphosphate-binding site is contributed by His288. 2 positions are modified to phosphoserine: Ser289 and Ser296.

Heterotetramer of two PDHA1 and two PDHB subunits. The heterotetramer interacts with DLAT, and is part of the multimeric pyruvate dehydrogenase complex that contains multiple copies of pyruvate dehydrogenase (E1), dihydrolipoamide acetyltransferase (DLAT, E2) and lipoamide dehydrogenase (DLD, E3). Thiamine diphosphate is required as a cofactor. It depends on Mg(2+) as a cofactor.

The protein localises to the mitochondrion matrix. It catalyses the reaction N(6)-[(R)-lipoyl]-L-lysyl-[protein] + pyruvate + H(+) = N(6)-[(R)-S(8)-acetyldihydrolipoyl]-L-lysyl-[protein] + CO2. Its activity is regulated as follows. Pyruvate dehydrogenase activity is inhibited by phosphorylation of PDHA1; it is reactivated by dephosphorylation. In terms of biological role, the pyruvate dehydrogenase complex catalyzes the overall conversion of pyruvate to acetyl-CoA and CO(2), and thereby links the glycolytic pathway to the tricarboxylic cycle. This Ascaris suum (Pig roundworm) protein is Pyruvate dehydrogenase E1 component subunit alpha type I, mitochondrial.